Reading from the N-terminus, the 620-residue chain is Glutathione-regulated potassium-efflux system protein KefC (620 aa).

12 helical membrane-spanning segments follow: residues 4–24, 26–46, 54–74, 90–110, 114–134, 149–169, 178–198, 218–238, 270–290, 294–314, 327–347, and 359–379; these read HTLV…PIAV, LGLG…LWGL, SILH…GLEL, GALQ…LLGL, VAEL…MQAM, FAVL…IPLL, MGAF…VVLL, VFSA…EEVG, GLLL…GTLI, LRIV…LWLI, WFAV…GAAQ, and SLTL…VILN. Positions 399–518 constitute an RCK N-terminal domain; it reads QPRVIIAGFG…AGVEKPERET (120 aa). The interval 597 to 620 is disordered; that stretch reads GWQGTEEGKHTGNMADEPETKPSS.

Belongs to the monovalent cation:proton antiporter 2 (CPA2) transporter (TC 2.A.37) family. KefC subfamily. As to quaternary structure, homodimer. Interacts with the regulatory subunit KefF.

The protein resides in the cell inner membrane. Its function is as follows. Pore-forming subunit of a potassium efflux system that confers protection against electrophiles. Catalyzes K(+)/H(+) antiport. The protein is Glutathione-regulated potassium-efflux system protein KefC of Shigella flexneri serotype 5b (strain 8401).